A 132-amino-acid polypeptide reads, in one-letter code: Venom CUB domain-containing protein 2 (132 aa).

Residues 1-17 (MKTLFLAIALFSAVALA) form the signal peptide. The CUB domain occupies 22–129 (ESAELVPGGE…RGFVACKATA (108 aa)). Cystine bridges form between Cys-66-Cys-125 and Cys-77-Cys-94.

This sequence belongs to the venom CUB family. As to expression, expressed by the venom gland (posterior main gland) (at protein level).

Its subcellular location is the secreted. This chain is Venom CUB domain-containing protein 2, found in Platymeris rhadamanthus (Red spot assassin bug).